The sequence spans 525 residues: Mitoguardin (525 aa).

A helical transmembrane segment spans residues 26-45 (VVLFSLTAGVALMSVLSRFL). Basic residues predominate over residues 47–67 (RRKPPRPPRRARKYTGRRNRN). Disordered regions lie at residues 47-73 (RRKP…RSPN) and 210-239 (DEAE…GSDP). Acidic residues predominate over residues 211–220 (EAEEEAGEAD).

This sequence belongs to the mitoguardin family. Interacts with zuc.

The protein localises to the mitochondrion outer membrane. Its function is as follows. Regulator of mitochondrial fusion required to maintain neuronal homeostasis. In Drosophila melanogaster (Fruit fly), this protein is Mitoguardin.